Reading from the N-terminus, the 433-residue chain is ATP-dependent protease ATPase subunit HslU (433 aa).

Residues I18, 60–65 (GVGKTE), D246, E311, and R383 each bind ATP.

This sequence belongs to the ClpX chaperone family. HslU subfamily. As to quaternary structure, a double ring-shaped homohexamer of HslV is capped on each side by a ring-shaped HslU homohexamer. The assembly of the HslU/HslV complex is dependent on binding of ATP.

It localises to the cytoplasm. ATPase subunit of a proteasome-like degradation complex; this subunit has chaperone activity. The binding of ATP and its subsequent hydrolysis by HslU are essential for unfolding of protein substrates subsequently hydrolyzed by HslV. HslU recognizes the N-terminal part of its protein substrates and unfolds these before they are guided to HslV for hydrolysis. The protein is ATP-dependent protease ATPase subunit HslU of Cereibacter sphaeroides (strain ATCC 17025 / ATH 2.4.3) (Rhodobacter sphaeroides).